The following is a 132-amino-acid chain: Large ribosomal subunit protein uL14 (132 aa).

The protein belongs to the universal ribosomal protein uL14 family. As to quaternary structure, part of the 50S ribosomal subunit. Forms a cluster with proteins L3 and L24e, part of which may contact the 16S rRNA in 2 intersubunit bridges.

In terms of biological role, binds to 23S rRNA. Forms part of two intersubunit bridges in the 70S ribosome. This chain is Large ribosomal subunit protein uL14, found in Methanosphaera stadtmanae (strain ATCC 43021 / DSM 3091 / JCM 11832 / MCB-3).